The sequence spans 375 residues: MHNGSPIIRRKSTRIYVGKVPIGDGAPIAVQSMTNTKTTDVDATVAQIKALERVGVDIVRVSIPTMDAAEAFKLIKQQSTVPLVADIHFDYRIALKVAEYGVDCLRINPGNIGNESRIREVVACARDYNIPIRIGINGGSLEKDIQEKYGEPTPEALLESAMRHVDILDRLNFDQFKVSVKASDVFLAVNSYRLLAKQINNPLHLGITEAGGARSGSVKSAIGLGLLLSEGIGDTLRISLAADPVEEVKVGFDILKSLRIRARGINFIACPTCSRQEFDVIGTVNALEQRLEDLITPMDVSIIGCVVNGPGEALVSTIGVTGARNHSGFYEDGVRQKERFDNKAMIDQLEAKIRAKASILDANNRIVINQLDDNK.

4 residues coordinate [4Fe-4S] cluster: Cys-270, Cys-273, Cys-305, and Glu-312.

The protein belongs to the IspG family. [4Fe-4S] cluster serves as cofactor.

The catalysed reaction is (2E)-4-hydroxy-3-methylbut-2-enyl diphosphate + oxidized [flavodoxin] + H2O + 2 H(+) = 2-C-methyl-D-erythritol 2,4-cyclic diphosphate + reduced [flavodoxin]. It participates in isoprenoid biosynthesis; isopentenyl diphosphate biosynthesis via DXP pathway; isopentenyl diphosphate from 1-deoxy-D-xylulose 5-phosphate: step 5/6. Functionally, converts 2C-methyl-D-erythritol 2,4-cyclodiphosphate (ME-2,4cPP) into 1-hydroxy-2-methyl-2-(E)-butenyl 4-diphosphate. The chain is 4-hydroxy-3-methylbut-2-en-1-yl diphosphate synthase (flavodoxin) from Yersinia pseudotuberculosis serotype IB (strain PB1/+).